We begin with the raw amino-acid sequence, 531 residues long: MALAASFNMTNPQPAIEGGISEVEIISQQVDEETKSIAPVQLVNFAYRDLPLAAVDLSTAGSQLLSNLDEDYQREGSNWLKPCCGKRAAVWQVFLLSASLNSFLVACVILVVILLTLELLIDIKLLQFSSAFQFAGVIHWISLVILSVFFSETVLRIVVLGIWDYIENKIEVFDGAVIILSLAPMVASTVANGPRSPWDAISLIIMLRIWRVKRVIDAYVLPVKLEMEMVIQQYEKAKVIQDEQLERLTQICQEQGFEIRQLRAHLAQQDLDLAAEREAALQAPHVLSQPRSRFKVVEAGTWEEETAAESVVEELQPSQEAMVKDDMNSYISQYYNGPSSDSGVPDAAVCMVTTAAIDIHQPDISSDLFSLDMPLKLGGNGTGATSESASRSSVTRAQSDSSQTLGSSTDCSTAREEPSSEPGPSPLPLPPQQQVEEATVQDLLSSLSEDPCPSQRALDPAPLSRPSPAGSAQTSPELEHRVSLFNQKNQEGFTVFQIRPVIHFQPTVPVLEDKFRSLESKEQKLHRVPEA.

At 1-102 (MALAASFNMT…VFLLSASLNS (102 aa)) the chain is on the cytoplasmic side. A helical membrane pass occupies residues 103–123 (FLVACVILVVILLTLELLIDI). Over 124 to 129 (KLLQFS) the chain is Extracellular. A helical membrane pass occupies residues 130–150 (SAFQFAGVIHWISLVILSVFF). Residues 151–169 (SETVLRIVVLGIWDYIENK) are Cytoplasmic-facing. A helical membrane pass occupies residues 170-190 (IEVFDGAVIILSLAPMVASTV). The Extracellular portion of the chain corresponds to 191–199 (ANGPRSPWD). A helical transmembrane segment spans residues 200–220 (AISLIIMLRIWRVKRVIDAYV). Over 221–531 (LPVKLEMEMV…EQKLHRVPEA (311 aa)) the chain is Cytoplasmic. Residues 231–251 (IQQYEKAKVIQDEQLERLTQI) adopt a coiled-coil conformation. A disordered region spans residues 380–477 (NGTGATSESA…PAGSAQTSPE (98 aa)). Residues 383–412 (GATSESASRSSVTRAQSDSSQTLGSSTDCS) are compositionally biased toward polar residues. Pro residues predominate over residues 421 to 431 (EPGPSPLPLPP).

Homodimer; disulfide-linked.

The protein localises to the cell membrane. It is found in the cell projection. It localises to the dendrite. The protein resides in the perikaryon. In terms of biological role, voltage-sensor protein present on the post-synaptic side of glutamatergic mossy fibers and granule cells in the cerebellum. Despite the presence of a voltage-sensor segment, does not form a functional ion channel and its precise role remains unclear. Undergoes both rapid and slow structural rearrangements in response to changes in voltage. Contains a zinc-binding site that can regulate the slow conformational transition. The sequence is that of Transmembrane protein 266 from Macaca fascicularis (Crab-eating macaque).